The chain runs to 215 residues: N-(5'-phosphoribosyl)anthranilate isomerase (215 aa).

The protein belongs to the TrpF family.

It catalyses the reaction N-(5-phospho-beta-D-ribosyl)anthranilate = 1-(2-carboxyphenylamino)-1-deoxy-D-ribulose 5-phosphate. Its pathway is amino-acid biosynthesis; L-tryptophan biosynthesis; L-tryptophan from chorismate: step 3/5. The protein is N-(5'-phosphoribosyl)anthranilate isomerase of Sinorhizobium medicae (strain WSM419) (Ensifer medicae).